We begin with the raw amino-acid sequence, 593 residues long: Methionine--tRNA ligase (593 aa).

The short motif at proline 7–histidine 17 is the 'HIGH' region element. Residues cysteine 139, cysteine 142, cysteine 152, and cysteine 155 each coordinate Zn(2+). A 'KMSKS' region motif is present at residues lysine 343–serine 347. Residue threonine 346 coordinates ATP.

This sequence belongs to the class-I aminoacyl-tRNA synthetase family. MetG type 1 subfamily. In terms of assembly, monomer. Zn(2+) serves as cofactor.

Its subcellular location is the cytoplasm. It catalyses the reaction tRNA(Met) + L-methionine + ATP = L-methionyl-tRNA(Met) + AMP + diphosphate. In terms of biological role, is required not only for elongation of protein synthesis but also for the initiation of all mRNA translation through initiator tRNA(fMet) aminoacylation. In Saccharopolyspora erythraea (strain ATCC 11635 / DSM 40517 / JCM 4748 / NBRC 13426 / NCIMB 8594 / NRRL 2338), this protein is Methionine--tRNA ligase.